The primary structure comprises 605 residues: MQTLLVSSLVVSLAAALPHYIRSNGIEASLLTDPKDVSGRTVDYIIAGGGLTGLTTAARLTENPNISVLVIESGSYESDRGPIIEDLNAYGDIFGSSVDHAYETVELATNNQTALIRSGNGLGGSTLVNGGTWTRPHKAQVDSWETVFGNEGWNWDNVAAYSLQAERARAPNAKQIAAGHYFNASCHGVNGTVHAGPRDTGDDYSPIVKALMSAVEDRGVPTKKDFGCGDPHGVSMFPNTLHEDQVRSDAAREWLLPNYQRPNLQVLTGQYVGKVLLSQNGTTPRAVGVEFGTHKGNTHNVYAKHEVLLAAGSAVSPTILEYSGIGMKSILEPLGIDTVVDLPVGLNLQDQTTATVRSRITSAGAGQGQAAWFATFNETFGDYSEKAHELLNTKLEQWAEEAVARGGFHNTTALLIQYENYRDWIVNHNVAYSELFLDTAGVASFDVWDLLPFTRGYVHILDKDPYLHHFAYDPQYFLNELDLLGQAAATQLARNISNSGAMQTYFAGETIPGDNLAYDADLSAWTEYIPYHFRPNYHGVGTCSMMPKEMGGVVDNAARVYGVQGLRVIDGSIPPTQMSSHVMTVFYAMALKISDAILEDYASMQ.

The N-terminal stretch at 1–16 is a signal peptide; it reads MQTLLVSSLVVSLAAA. The FAD site is built by L51 and T52. Residue N65 is glycosylated (N-linked (GlcNAc...) asparagine). Residue E72 participates in FAD binding. N111 is a glycosylation site (N-linked (GlcNAc...) asparagine). 4 residues coordinate FAD: S125, N129, G130, and T132. N183 and N190 each carry an N-linked (GlcNAc...) asparagine glycan. C186 and C228 are oxidised to a cystine. V272 provides a ligand contact to FAD. 4 N-linked (GlcNAc...) asparagine glycosylation sites follow: N280, N377, N410, and N495. H538 serves as the catalytic Proton acceptor. Residues R559 and V560 each contribute to the O2 site. The FAD site is built by G571 and M583.

Belongs to the GMC oxidoreductase family. As to quaternary structure, homodimer. Requires FAD as cofactor. The N-linked sugar chains of the glucose oxidase contributed to the high solubility of the enzyme in water.

The protein localises to the secreted. Its subcellular location is the cell wall. The protein resides in the cytoplasm. It localises to the extracellular space. It is found in the extracellular matrix. It carries out the reaction beta-D-glucose + O2 = D-glucono-1,5-lactone + H2O2. Glucose oxidase catalyzes the oxidation of beta-D-glucose to D-glucono-delta-lactone and hydrogen peroxide in the presence of molecular oxygen. D-glucono-delta-lactone is sequentially hydrolyzed by lactonase to D-gluconic acid, and the resulting hydrogen peroxide is hydrolyzed by catalase to oxygen and water. The activity shows high specificity to beta-D-glucose, with very low to no activity towards L-glucose, 2-deoxy-D-glucose, 3-deoxy-D-glucose, 4-deoxy-D-glucose, 5-deoxy-D-glucose, 6-deoxy-D-glucose, 3-O-methyl-D-glucose, 4-O-methyl-D-glucose, 6-O-methyl-D-glucose, 4,6-O-benzylidene-D-glucose, 5-thio-5-deoxy-D-glucose, D-mannose, D-allose, D-galactose, D-fructose, D-arabinose, D-xylose, trehalose, melibiose, L-mannomethylose, lactose, sucrose or 1,5-anhydro-D-glucitol. This is Glucose oxidase from Aspergillus niger.